We begin with the raw amino-acid sequence, 64 residues long: MPKLKTNRGAVKRFKVTGSGKIKRAASNHNHILTKKSQKRKRRLRKIHEVAPSDMRAVSEMLRD.

Belongs to the bacterial ribosomal protein bL35 family.

The chain is Large ribosomal subunit protein bL35 from Coxiella burnetii (strain RSA 493 / Nine Mile phase I).